A 297-amino-acid polypeptide reads, in one-letter code: Phosphatidylinositol N-acetylglucosaminyltransferase subunit C (297 aa).

Transmembrane regions (helical) follow at residues V67 to G87, T88 to G108, A153 to V173, and A239 to I259.

This sequence belongs to the PIGC family. As to quaternary structure, component of the glycosylphosphatidylinositol-N-acetylglucosaminyltransferase (GPI-GnT) complex composed at least by PIGA, PIGC, PIGH, PIGP, PIGQ, PIGY and DPM2. Interacts with PIGQ. Interacts with the heterodimer PIGA:PIGH.

It localises to the endoplasmic reticulum membrane. The protein operates within glycolipid biosynthesis; glycosylphosphatidylinositol-anchor biosynthesis. Part of the glycosylphosphatidylinositol-N-acetylglucosaminyltransferase (GPI-GnT) complex that catalyzes the transfer of N-acetylglucosamine from UDP-N-acetylglucosamine to phosphatidylinositol and participates in the first step of GPI biosynthesis. The chain is Phosphatidylinositol N-acetylglucosaminyltransferase subunit C from Bos taurus (Bovine).